A 300-amino-acid polypeptide reads, in one-letter code: N-acetylmuramic acid 6-phosphate etherase (300 aa).

Residues Ile57–Lys220 form the SIS domain. The Proton donor role is filled by Glu85. Residue Glu116 is part of the active site.

Belongs to the GCKR-like family. MurNAc-6-P etherase subfamily. In terms of assembly, homodimer.

It catalyses the reaction N-acetyl-D-muramate 6-phosphate + H2O = N-acetyl-D-glucosamine 6-phosphate + (R)-lactate. It functions in the pathway amino-sugar metabolism; 1,6-anhydro-N-acetylmuramate degradation. Its pathway is amino-sugar metabolism; N-acetylmuramate degradation. It participates in cell wall biogenesis; peptidoglycan recycling. Its function is as follows. Specifically catalyzes the cleavage of the D-lactyl ether substituent of MurNAc 6-phosphate, producing GlcNAc 6-phosphate and D-lactate. Together with AnmK, is also required for the utilization of anhydro-N-acetylmuramic acid (anhMurNAc) either imported from the medium or derived from its own cell wall murein, and thus plays a role in cell wall recycling. The sequence is that of N-acetylmuramic acid 6-phosphate etherase from Aliivibrio fischeri (strain ATCC 700601 / ES114) (Vibrio fischeri).